The sequence spans 1294 residues: uncharacterized protein (1294 aa).

Residues 1–375 (MSQQENGDVA…RNFKLNFSDY (375 aa)) are Extracellular-facing. The ABC transporter 1 domain maps to 28-287 (LHVRDLSIVA…FESIGYHVPQ (260 aa)). Residue Asn41 is glycosylated (N-linked (GlcNAc...) asparagine). ATP is bound at residue 62–69 (GGSGSGKT). Asn86, Asn101, Asn151, Asn341, Asn349, and Asn371 each carry an N-linked (GlcNAc...) asparagine glycan. The chain crosses the membrane as a helical span at residues 376 to 396 (VTLISTFAEPLIIGTVCGWIY). Residues 397–495 (YKPDKSSIGG…EADARKFFYQ (99 aa)) lie on the Cytoplasmic side of the membrane. Residues 496–516 (FAVVFLCQLSCSGLSMLSVAV) form a helical membrane-spanning segment. Residues 517 to 530 (SRDFSKASLVGNMT) are Extracellular-facing. Asn528 carries an N-linked (GlcNAc...) asparagine glycan. A helical membrane pass occupies residues 531 to 551 (FTVLSMGCGFFVNAKVMPVYV). Topologically, residues 552-604 (RWIKYIAFTWYSFGTLMSSTFTNSYCTTDNLDECLGNQILEVYGFPRNWITVP) are cytoplasmic. Residues 605-625 (AVVLLCWSVGYFVVGAIILYL) form a helical membrane-spanning segment. Over 626 to 1038 (HKIDITLQNE…TTTRRSFDSL (413 aa)) the chain is Extracellular. In terms of domain architecture, ABC transporter 2 spans 679 to 941 (IKLEDIDLRV…FTELGYNCPS (263 aa)). An ATP-binding site is contributed by 727–734 (GPSGSGKS). The N-linked (GlcNAc...) asparagine glycan is linked to Asn983. The helical transmembrane segment at 1039-1059 (MARIAQIPGLGVIFALFFAPV) threads the bilayer. The Cytoplasmic segment spans residues 1060–1120 (KHNYTSISNR…PFFLAYMTLE (61 aa)). Residues 1121 to 1141 (LPLSALASVLYAVFTVLACGL) traverse the membrane as a helical segment. The Extracellular portion of the chain corresponds to 1142 to 1266 (PRTAGNFFAT…YGLVRNTQKY (125 aa)). A helical membrane pass occupies residues 1267–1287 (LGIIVCVAIIYRLIAFFILKA). The Cytoplasmic segment spans residues 1288–1294 (KLEWIKW).

The protein belongs to the ABC transporter superfamily. ABCG family. PDR (TC 3.A.1.205) subfamily.

The protein resides in the membrane. This is an uncharacterized protein from Saccharomyces cerevisiae (strain ATCC 204508 / S288c) (Baker's yeast).